Here is a 189-residue protein sequence, read N- to C-terminus: dCTP deaminase (189 aa).

DCTP contacts are provided by residues 112–117, 136–138, Gln-157, Tyr-171, and Gln-181; these read KSTYAR and TLE. The active-site Proton donor/acceptor is the Glu-138.

This sequence belongs to the dCTP deaminase family. Homotrimer.

The enzyme catalyses dCTP + H2O + H(+) = dUTP + NH4(+). It functions in the pathway pyrimidine metabolism; dUMP biosynthesis; dUMP from dCTP (dUTP route): step 1/2. In terms of biological role, catalyzes the deamination of dCTP to dUTP. The protein is dCTP deaminase of Xanthomonas euvesicatoria pv. vesicatoria (strain 85-10) (Xanthomonas campestris pv. vesicatoria).